The sequence spans 354 residues: Phosphate acyltransferase (354 aa).

Belongs to the PlsX family. Homodimer. Probably interacts with PlsY.

The protein localises to the cytoplasm. The enzyme catalyses a fatty acyl-[ACP] + phosphate = an acyl phosphate + holo-[ACP]. It participates in lipid metabolism; phospholipid metabolism. Functionally, catalyzes the reversible formation of acyl-phosphate (acyl-PO(4)) from acyl-[acyl-carrier-protein] (acyl-ACP). This enzyme utilizes acyl-ACP as fatty acyl donor, but not acyl-CoA. The protein is Phosphate acyltransferase of Bordetella petrii (strain ATCC BAA-461 / DSM 12804 / CCUG 43448).